Reading from the N-terminus, the 71-residue chain is Ubiquinol-cytochrome c reductase complex assembly factor 6 (71 aa).

Over 1–8 (MPAGVPMS) the chain is Mitochondrial matrix. The chain crosses the membrane as a helical; Signal-anchor for type II membrane protein span at residues 9–25 (TYLKMFAASLLAMCAGA). Topologically, residues 26 to 71 (EVVHRYYRPDLTIPEIPPKRGELKTELLGLKERKHKPQVSQQEELK) are mitochondrial intermembrane.

Belongs to the UQCC6 family. In terms of assembly, interacts with UQCRC1. Interacts with UQCRQ. Interacts with UQCC5. Forms a complex, named COMB/coordinator of mitochondrial CYTB biogenesis, composed of UQCC1, UQCC2, UQCC4, UQCC5 and UQCC6; stabilizes nascent cytochrome b/MT-CYB and promotes its membrane insertion. Forms a complex, named COMA, composed of UQCC1, UQCC2 and UQCC4; activates MT-CYB translation. Forms a complex, named COMC, composed of UQCC1, UQCC2; UQCC3 and UQCC4; mediates MT-CYB hemylation and association with the first nuclear-encoded complex III subunit UQCRQ. Interacts with MT-CYB. Cardiac and skeletal muscle (at protein level).

The protein resides in the mitochondrion inner membrane. In terms of biological role, required for the assembly and stability of the mitochondrial ubiquinol-cytochrome c reductase complex (complex III (CIII) or cytochrome b-c1 complex), a multisubunit transmembrane complex that is part of the mitochondrial electron transport chain (ETC) which drives oxidative phosphorylation. Mediates early complex III biogenesis. Participates in regulating the levels of electron transport chain proteins, and therefore energy supply, in response to changes in energy demand. Also required for cytochrome c oxidase complex (complex IV) assembly. This chain is Ubiquinol-cytochrome c reductase complex assembly factor 6, found in Homo sapiens (Human).